The chain runs to 999 residues: Sarcoplasmic/endoplasmic reticulum calcium ATPase 3 (999 aa).

Position 1 is an N-acetylmethionine (methionine 1). Residues 1–48 (MEEAHLLSAADVLRRFSVTAEGGLTLEQVTDARERYGPNELPTEEGKS) are Cytoplasmic-facing. Serine 17 bears the Phosphoserine mark. Threonine 19 is subject to Phosphothreonine. Residues 49–69 (LWELVVEQFEDLLVRILLLAA) traverse the membrane as a helical segment. Topologically, residues 70 to 89 (LVSFVLAWFEEGEETTTAFV) are lumenal. A helical membrane pass occupies residues 90 to 110 (EPLVIMLILVANAIVGVWQER). At 111–253 (NAESAIEALK…PERTPLQRKL (143 aa)) the chain is on the cytoplasmic side. Residues 254–273 (DEFGRQLSHAISVICVAVWV) traverse the membrane as a helical segment. Residues 274–295 (INIGHFADPAHGGSWLRGAVYY) are Lumenal-facing. A helical transmembrane segment spans residues 296 to 313 (FKIAVALAVAAIPEGLPA). Residues valine 304, alanine 305, isoleucine 307, and glutamate 309 each coordinate Ca(2+). Topologically, residues 314–757 (VITTCLALGT…EEGRAIYNNM (444 aa)) are cytoplasmic. The active-site 4-aspartylphosphate intermediate is aspartate 351. Residues aspartate 351 and threonine 353 each contribute to the Mg(2+) site. Threonine 353 provides a ligand contact to ATP. The interval 370–400 (AEAEAGACRLHEFTISGTTYTPEGEVRQGEQ) is interaction with phospholamban 1. Threonine 415 carries the post-translational modification Phosphothreonine. 7 residues coordinate ATP: glutamate 442, arginine 489, lysine 515, arginine 560, threonine 625, glycine 626, and aspartate 627. Phosphoserine is present on serine 662. Positions 678 and 684 each coordinate ATP. Residue aspartate 703 participates in Mg(2+) binding. Asparagine 706 serves as a coordination point for ATP. A helical transmembrane segment spans residues 758 to 777 (KQFIRYLISSNVGEVVCIFL). Ca(2+) is bound by residues asparagine 768 and glutamate 771. The Lumenal portion of the chain corresponds to 778 to 787 (TAILGLPEAL). A helical transmembrane segment spans residues 788–808 (IPVQLLWVNLVTDGLPATALG). Residues 788 to 808 (IPVQLLWVNLVTDGLPATALG) form an interaction with phospholamban 2 region. The Ca(2+) site is built by asparagine 796, threonine 799, and aspartate 800. The Cytoplasmic portion of the chain corresponds to 809–828 (FNPPDLDIMEKLPRNPREAL). The helical transmembrane segment at 829–851 (ISGWLFFRYLAIGVYVGLATVAA) threads the bilayer. The Lumenal portion of the chain corresponds to 852 to 897 (ATWWFLYDAEGPQVTFHQLRNFLKCSEDNPLFAGIDCEVFESRFPT). A helical membrane pass occupies residues 898-917 (TMALSVLVTIEMCNALNSVS). Residue glutamate 908 participates in Ca(2+) binding. Residues 918 to 930 (ENQSLLRMPPWLN) are Cytoplasmic-facing. Residues 931-949 (PWLLGAVVMSMALHFLILL) traverse the membrane as a helical segment. The Lumenal portion of the chain corresponds to 950-964 (VPPLPLIFQVTPLSG). Residues 965–985 (RQWGVVLQMSLPVILLDEALK) traverse the membrane as a helical segment. Over 986-999 (YLSRHHVDEKKDLK) the chain is Cytoplasmic.

This sequence belongs to the cation transport ATPase (P-type) (TC 3.A.3) family. Type IIA subfamily. As to quaternary structure, interacts with sarcolipin (SLN). Interacts with phospholamban (PLN). Interacts with myoregulin (MRLN). Interacts with DWORF. Interacts with VMP1. Interacts with TUNAR; the interaction occurs at low levels in low glucose conditions and is increased by high glucose levels. Mg(2+) serves as cofactor. As to expression, found in most tissues. Most abundant in large and small intestine, spleen and lung. Also detected in PC12 cells.

Its subcellular location is the endoplasmic reticulum membrane. It localises to the sarcoplasmic reticulum membrane. It carries out the reaction Ca(2+)(in) + ATP + H2O = Ca(2+)(out) + ADP + phosphate + H(+). Its activity is regulated as follows. Inhibited by sarcolipin (SLN), phospholamban (PLN) and myoregulin (MRLN). Enhanced by DWORF; DWORF increases activity by displacing sarcolipin (SLN), phospholamban (PLN) and myoregulin (MRLN). In terms of biological role, this magnesium-dependent enzyme catalyzes the hydrolysis of ATP coupled with the transport of the calcium. Transports calcium ions from the cytosol into the sarcoplasmic/endoplasmic reticulum lumen. Contributes to calcium sequestration involved in muscular excitation/contraction. Its function is as follows. This magnesium-dependent enzyme catalyzes the hydrolysis of ATP coupled with the transport of calcium. Transports calcium ions from the cytosol into the sarcoplasmic/endoplasmic reticulum lumen. Contributes to calcium sequestration involved in muscular excitation/contraction. This is Sarcoplasmic/endoplasmic reticulum calcium ATPase 3 (Atp2a3) from Rattus norvegicus (Rat).